A 512-amino-acid chain; its full sequence is Maturase K (512 aa).

The protein belongs to the intron maturase 2 family. MatK subfamily.

It localises to the plastid. Its subcellular location is the chloroplast. In terms of biological role, usually encoded in the trnK tRNA gene intron. Probably assists in splicing its own and other chloroplast group II introns. This chain is Maturase K, found in Piper cenocladum (Ant piper).